The chain runs to 496 residues: Membrane-bound lytic murein transglycosylase F (496 aa).

A signal peptide spans 1–31 (MPIFSTRVLTYLRCIFRLFIGLMLLLTLVGC). Residues 32-271 (DFYTPSSQLE…KLDEKYFGHV (240 aa)) form a non-LT domain region. The tract at residues 273–496 (NFDFVDTRTF…AEVVKQITLR (224 aa)) is LT domain. Glu316 is a catalytic residue. The disordered stretch occupies residues 464–485 (HRREELDEDDSSEPQSTERPTV).

The protein in the N-terminal section; belongs to the bacterial solute-binding protein 3 family. This sequence in the C-terminal section; belongs to the transglycosylase Slt family.

The protein localises to the cell outer membrane. The enzyme catalyses Exolytic cleavage of the (1-&gt;4)-beta-glycosidic linkage between N-acetylmuramic acid (MurNAc) and N-acetylglucosamine (GlcNAc) residues in peptidoglycan, from either the reducing or the non-reducing ends of the peptidoglycan chains, with concomitant formation of a 1,6-anhydrobond in the MurNAc residue.. In terms of biological role, murein-degrading enzyme that degrades murein glycan strands and insoluble, high-molecular weight murein sacculi, with the concomitant formation of a 1,6-anhydromuramoyl product. Lytic transglycosylases (LTs) play an integral role in the metabolism of the peptidoglycan (PG) sacculus. Their lytic action creates space within the PG sacculus to allow for its expansion as well as for the insertion of various structures such as secretion systems and flagella. The protein is Membrane-bound lytic murein transglycosylase F of Aeromonas salmonicida (strain A449).